A 287-amino-acid chain; its full sequence is 4-hydroxybenzoate octaprenyltransferase (287 aa).

The next 5 helical transmembrane spans lie at I20–G38, I95–V115, I211–E231, I235–F255, and F266–V286.

It belongs to the UbiA prenyltransferase family. The cofactor is Mg(2+).

The protein resides in the cell inner membrane. The enzyme catalyses all-trans-octaprenyl diphosphate + 4-hydroxybenzoate = 4-hydroxy-3-(all-trans-octaprenyl)benzoate + diphosphate. It functions in the pathway cofactor biosynthesis; ubiquinone biosynthesis. Its function is as follows. Catalyzes the prenylation of para-hydroxybenzoate (PHB) with an all-trans polyprenyl group. Mediates the second step in the final reaction sequence of ubiquinone-8 (UQ-8) biosynthesis, which is the condensation of the polyisoprenoid side chain with PHB, generating the first membrane-bound Q intermediate 3-octaprenyl-4-hydroxybenzoate. The sequence is that of 4-hydroxybenzoate octaprenyltransferase from Shewanella piezotolerans (strain WP3 / JCM 13877).